The chain runs to 494 residues: Glycogen synthase (494 aa).

Lysine 15 contacts ADP-alpha-D-glucose.

The protein belongs to the glycosyltransferase 1 family. Bacterial/plant glycogen synthase subfamily.

The enzyme catalyses [(1-&gt;4)-alpha-D-glucosyl](n) + ADP-alpha-D-glucose = [(1-&gt;4)-alpha-D-glucosyl](n+1) + ADP + H(+). It participates in glycan biosynthesis; glycogen biosynthesis. Functionally, synthesizes alpha-1,4-glucan chains using ADP-glucose. The polypeptide is Glycogen synthase (Albidiferax ferrireducens (strain ATCC BAA-621 / DSM 15236 / T118) (Rhodoferax ferrireducens)).